Here is a 443-residue protein sequence, read N- to C-terminus: Diels-Alderase poxQ (443 aa).

The N-terminal stretch at 1–23 (MARIPLEFLSITLPVLLLAYCLA) is a signal peptide. Residues Asn-78, Asn-97, and Asn-145 are each glycosylated (N-linked (GlcNAc...) asparagine).

This sequence belongs to the Diels-Alderase family.

Its pathway is secondary metabolite biosynthesis. Diels-Alderase; part of the gene cluster that mediates the biosynthesis of oxaleimides, cytotoxic compounds containing an unusual disubstituted succinimide moiety. The first step of the pathway is provided by the HR-PKS poxF that serves in a new mode of collaborative biosynthesis with the PKS-NRPS poxE, by providing the olefin containing amino acid substrate via the synthesis of an ACP-bound dec-4-enoate. The cytochrome P450 monooxygenase poxM-catalyzed oxidation at the alpha-position creates the enzyme-bound 2-hydroxydec-4-enoyl-ACP thioester, which may be prone to spontaneous hydrolysis to yield 2-hydroxydec-4-enoic acid due to increased electrophilicity of the carbonyl. 2-hydroxydec-4-enoic acid can then be further oxidized by poxM to yield the alpha-ketoacid 2-oxodec-4-enoicacid, which is reductively aminated by the aminotransferase poxL to yield (S,E)-2-aminodec-4-enoic acid. The Hybrid PKS-NRPS synthetase poxE then performs condensation between the octaketide product of its PKS modules and the amino group of (S,E)-2-aminodec-4-enoic acid which is activated and incorporated by the adenylation domain. The resulting aminoacyl product can be cyclized by the Diels-Alderase PoxQ and reductively released by the reductive (R) domain of poxE to yield an aldehyde intermediate. The released aldehyde is then substrate for a Knoevenagel condensation by the hydrolyase poxO followed by an oxidation at the 5-position of the pyrrolidone ring. The presence of the olefin from the amino acid building block allows for migration of the substituted allyl group to occur. This allylic transposition reaction takes place in a conjugate addition, semipinacol-like fashion to yield a succinimide intermediate. Iterative two-electron oxidations of the C7 methyl of the succinimide intermediate to the carboxylic acid can be catalyzed by one of two remaining cytochrome P450 monooxygenasess poxC or poxD to yield oxaleimide A. Subsequent oxidation yields the maleimide scaffold oxaleimide I. Both oxaleimide A and oxaleimide I can undergo oxidative modifications in the decalin ring to yield the series of products oxaleimides B to H. The protein is Diels-Alderase poxQ of Penicillium oxalicum (strain 114-2 / CGMCC 5302) (Penicillium decumbens).